The sequence spans 375 residues: Putative glutamate--cysteine ligase 2 (375 aa).

This sequence belongs to the glutamate--cysteine ligase type 2 family. YbdK subfamily.

The catalysed reaction is L-cysteine + L-glutamate + ATP = gamma-L-glutamyl-L-cysteine + ADP + phosphate + H(+). Functionally, ATP-dependent carboxylate-amine ligase which exhibits weak glutamate--cysteine ligase activity. In Sorangium cellulosum (strain So ce56) (Polyangium cellulosum (strain So ce56)), this protein is Putative glutamate--cysteine ligase 2.